A 306-amino-acid chain; its full sequence is Curved DNA-binding protein (306 aa).

Residues 5-69 enclose the J domain; it reads DYYAIMGVKP…QRRAEYDQLW (65 aa).

It is found in the cytoplasm. It localises to the nucleoid. In terms of biological role, DNA-binding protein that preferentially recognizes a curved DNA sequence. It is probably a functional analog of DnaJ; displays overlapping activities with DnaJ, but functions under different conditions, probably acting as a molecular chaperone in an adaptive response to environmental stresses other than heat shock. Lacks autonomous chaperone activity; binds native substrates and targets them for recognition by DnaK. Its activity is inhibited by the binding of CbpM. The polypeptide is Curved DNA-binding protein (Citrobacter koseri (strain ATCC BAA-895 / CDC 4225-83 / SGSC4696)).